The following is a 241-amino-acid chain: Ribonuclease PH (241 aa).

Phosphate contacts are provided by residues R87 and 125-127 (GTR).

Belongs to the RNase PH family. In terms of assembly, homohexameric ring arranged as a trimer of dimers.

The catalysed reaction is tRNA(n+1) + phosphate = tRNA(n) + a ribonucleoside 5'-diphosphate. Functionally, phosphorolytic 3'-5' exoribonuclease that plays an important role in tRNA 3'-end maturation. Removes nucleotide residues following the 3'-CCA terminus of tRNAs; can also add nucleotides to the ends of RNA molecules by using nucleoside diphosphates as substrates, but this may not be physiologically important. Probably plays a role in initiation of 16S rRNA degradation (leading to ribosome degradation) during starvation. In Nitrosomonas europaea (strain ATCC 19718 / CIP 103999 / KCTC 2705 / NBRC 14298), this protein is Ribonuclease PH.